The primary structure comprises 376 residues: Flap endonuclease 1 (376 aa).

An N-domain region spans residues 1–105 (MGIKGLSKLL…GELHKRKENA (105 aa)). A Mg(2+)-binding site is contributed by aspartate 34. Positions 47 and 71 each coordinate DNA. Residues aspartate 87, glutamate 159, glutamate 161, aspartate 180, and aspartate 182 each coordinate Mg(2+). Residues 123-254 (QAKKLMKRTA…ITAFELIQQY (132 aa)) are I-domain. Glutamate 159 lines the DNA pocket. DNA contacts are provided by glycine 232 and aspartate 234. Residue aspartate 234 coordinates Mg(2+). An interaction with PCNA region spans residues 336–344 (AQGRLDSFF). Positions 354-376 (SEAASGVKRKKPTTKAKESRKKK) are disordered. Residues 360-376 (VKRKKPTTKAKESRKKK) show a composition bias toward basic residues.

This sequence belongs to the XPG/RAD2 endonuclease family. FEN1 subfamily. Interacts with PCNA. Three molecules of FEN1 bind to one PCNA trimer with each molecule binding to one PCNA monomer. PCNA stimulates the nuclease activity without altering cleavage specificity. It depends on Mg(2+) as a cofactor. Post-translationally, phosphorylated. Phosphorylation upon DNA damage induces relocalization to the nuclear plasma.

Its subcellular location is the nucleus. The protein resides in the nucleolus. It is found in the nucleoplasm. The protein localises to the mitochondrion. Its function is as follows. Structure-specific nuclease with 5'-flap endonuclease and 5'-3' exonuclease activities involved in DNA replication and repair. During DNA replication, cleaves the 5'-overhanging flap structure that is generated by displacement synthesis when DNA polymerase encounters the 5'-end of a downstream Okazaki fragment. It enters the flap from the 5'-end and then tracks to cleave the flap base, leaving a nick for ligation. Also involved in the long patch base excision repair (LP-BER) pathway, by cleaving within the apurinic/apyrimidinic (AP) site-terminated flap. Acts as a genome stabilization factor that prevents flaps from equilibrating into structures that lead to duplications and deletions. Also possesses 5'-3' exonuclease activity on nicked or gapped double-stranded DNA, and exhibits RNase H activity. Also involved in replication and repair of rDNA and in repairing mitochondrial DNA. In Entamoeba histolytica (strain ATCC 30459 / HM-1:IMSS / ABRM), this protein is Flap endonuclease 1.